The chain runs to 539 residues: MSFKCIFLTGGVVSSLGKGLTAASLALLLERQSLKVSMLKLDPYLNVDPGTMNPYEHGEVYVTNDGIETDLDLGHYHRFSSVKLSKYSTATSGQIYARVIKKEREGVYLGSTVQVIPHITNEIIEVILECARENQPDVLIVEIGGTVGDIESLPFLEAIRQFRYEHAENCFSIHMTYVPYLKAAGEVKTKPTQHSVQSLRSIGIIPDAILCRSESSLSPDVKKKISLFCNVPNNAVFNVVDIEHSIYEMPLMLSQENISTFITEKLGLFTKQEDLSDWKTLVERLRNPSLDKVRIGLVGKYVQHKDAYKSVFEALTHAALSLNSSVEILPLDSEDPHFLETLEQCDGCLVPGGFGSRGWEGKITAAKLCRERGIPYFGICLGMQVLVVEYARNVLRLEKANSTEMDAETPDPVICMMDGQASLVATGGTMRLGAYPCLISPGTKVHEAYGESEVMERHRHRYEVNFDYVQQFKDFGLNVVGTCPQQGLCEIVEIENHPWMIGVQFHPEFLSKLIAPHPLFVGFIQAAILYSRNKSYVQA.

The amidoligase domain stretch occupies residues 1 to 268; that stretch reads MSFKCIFLTG…STFITEKLGL (268 aa). Position 14 (serine 14) interacts with CTP. Residue serine 14 coordinates UTP. An ATP-binding site is contributed by 15–20; sequence SLGKGL. Residue tyrosine 55 coordinates L-glutamine. Aspartate 72 lines the ATP pocket. Residues aspartate 72 and glutamate 142 each contribute to the Mg(2+) site. Residues 149–151, 188–193, and lysine 224 contribute to the CTP site; these read DIE and KTKPTQ. UTP is bound by residues 188–193 and lysine 224; that span reads KTKPTQ. Residues 294-533 enclose the Glutamine amidotransferase type-1 domain; sequence RIGLVGKYVQ…IQAAILYSRN (240 aa). Glycine 353 contributes to the L-glutamine binding site. Residue cysteine 380 is the Nucleophile; for glutamine hydrolysis of the active site. L-glutamine is bound by residues 381–384, glutamate 404, and arginine 461; that span reads LGMQ. Residues histidine 506 and glutamate 508 contribute to the active site.

This sequence belongs to the CTP synthase family. Homotetramer.

It carries out the reaction UTP + L-glutamine + ATP + H2O = CTP + L-glutamate + ADP + phosphate + 2 H(+). The catalysed reaction is L-glutamine + H2O = L-glutamate + NH4(+). It catalyses the reaction UTP + NH4(+) + ATP = CTP + ADP + phosphate + 2 H(+). Its pathway is pyrimidine metabolism; CTP biosynthesis via de novo pathway; CTP from UDP: step 2/2. With respect to regulation, allosterically activated by GTP, when glutamine is the substrate; GTP has no effect on the reaction when ammonia is the substrate. The allosteric effector GTP functions by stabilizing the protein conformation that binds the tetrahedral intermediate(s) formed during glutamine hydrolysis. Inhibited by the product CTP, via allosteric rather than competitive inhibition. Functionally, catalyzes the ATP-dependent amination of UTP to CTP with either L-glutamine or ammonia as the source of nitrogen. Regulates intracellular CTP levels through interactions with the four ribonucleotide triphosphates. This chain is CTP synthase, found in Chlamydia felis (strain Fe/C-56) (Chlamydophila felis).